The sequence spans 136 residues: Histone H3.1 (136 aa).

The segment at 1–43 is disordered; sequence MARTKQTARKSTGGKAPRKQLATKAARKSAPATGGVKKPHRYR. An Asymmetric dimethylarginine; by PRMT6; alternate modification is found at Arg3. A Citrulline; alternate modification is found at Arg3. Thr4 bears the Phosphothreonine; by HASPIN and VRK1 mark. The residue at position 5 (Lys5) is an Allysine; alternate. Lys5 is modified (N6,N6,N6-trimethyllysine; alternate). Position 5 is an N6,N6-dimethyllysine; alternate (Lys5). Lys5 is modified (N6-(2-hydroxyisobutyryl)lysine; alternate). Lys5 carries the post-translational modification N6-(beta-hydroxybutyryl)lysine; alternate. Lys5 is modified (N6-acetyllysine; alternate). N6-crotonyllysine; alternate is present on Lys5. Lys5 carries the post-translational modification N6-methyllysine; alternate. Gln6 bears the 5-glutamyl dopamine; alternate mark. Gln6 is modified (5-glutamyl serotonin; alternate). Residue Thr7 is modified to Phosphothreonine; by PKC. Arg9 carries the citrulline; alternate modification. The residue at position 9 (Arg9) is a Symmetric dimethylarginine; by PRMT5; alternate. An N6,N6,N6-trimethyllysine; alternate modification is found at Lys10. Lys10 is subject to N6,N6-dimethyllysine; alternate. The residue at position 10 (Lys10) is an N6-(2-hydroxyisobutyryl)lysine; alternate. N6-(beta-hydroxybutyryl)lysine; alternate is present on Lys10. Lys10 bears the N6-acetyllysine; alternate mark. Residue Lys10 is modified to N6-crotonyllysine; alternate. Residue Lys10 is modified to N6-methyllysine; alternate. Residue Lys10 is modified to N6-butyryllysine; alternate. Position 10 is an N6-lactoyllysine; alternate (Lys10). At Ser11 the chain carries ADP-ribosylserine; alternate. Ser11 carries the post-translational modification Phosphoserine; alternate; by AURKB, AURKC, RPS6KA3, RPS6KA4 and RPS6KA5. The residue at position 12 (Thr12) is a Phosphothreonine; by PKC and CHEK1. Residue Lys15 is modified to N6-(2-hydroxyisobutyryl)lysine; alternate. Residue Lys15 is modified to N6-(beta-hydroxybutyryl)lysine; alternate. N6-acetyllysine; alternate is present on Lys15. Lys15 carries the post-translational modification N6-lactoyllysine; alternate. At Lys15 the chain carries N6-glutaryllysine; alternate. N6-succinyllysine; alternate is present on Lys15. Position 18 is a citrulline; alternate (Arg18). At Arg18 the chain carries Asymmetric dimethylarginine; by CARM1; alternate. N6-(2-hydroxyisobutyryl)lysine; alternate occurs at positions 19 and 24. Residues Lys19 and Lys24 each carry the N6-(beta-hydroxybutyryl)lysine; alternate modification. 2 positions are modified to N6-acetyllysine; alternate: Lys19 and Lys24. Residues Lys19 and Lys24 each carry the N6-crotonyllysine; alternate modification. An N6-methyllysine; alternate mark is found at Lys19 and Lys24. N6-butyryllysine; alternate occurs at positions 19 and 24. An N6-lactoyllysine; alternate mark is found at Lys19 and Lys24. N6-glutaryllysine; alternate occurs at positions 19 and 24. Lys19 carries N6-decanoyllysine lipidation. Citrulline is present on Arg27. N6,N6,N6-trimethyllysine; alternate is present on Lys28. Lys28 is subject to N6,N6-dimethyllysine; alternate. Residue Lys28 is modified to N6-(2-hydroxyisobutyryl)lysine; alternate. An N6-(beta-hydroxybutyryl)lysine; alternate modification is found at Lys28. Lys28 is subject to N6-acetyllysine; alternate. Residue Lys28 is modified to N6-crotonyllysine; alternate. Position 28 is an N6-methyllysine; alternate (Lys28). Residue Lys28 is modified to N6-lactoyllysine; alternate. N6-glutaryllysine; alternate is present on Lys28. Position 29 is an ADP-ribosylserine; alternate (Ser29). The residue at position 29 (Ser29) is a Phosphoserine; alternate; by AURKB, AURKC and RPS6KA5. Residue Lys37 is modified to N6,N6,N6-trimethyllysine; alternate. Lys37 bears the N6,N6-dimethyllysine; alternate mark. The residue at position 37 (Lys37) is an N6-(2-hydroxyisobutyryl)lysine; alternate. Lys37 bears the N6-acetyllysine; alternate mark. An N6-methyllysine; alternate modification is found at Lys37. An N6-methyllysine modification is found at Lys38. A Phosphotyrosine modification is found at Tyr42. At Lys57 the chain carries N6,N6,N6-trimethyllysine; alternate. Lys57 carries the post-translational modification N6-(2-hydroxyisobutyryl)lysine; alternate. Lys57 is subject to N6-(beta-hydroxybutyryl)lysine; alternate. An N6-acetyllysine; alternate modification is found at Lys57. Lys57 is subject to N6-crotonyllysine; alternate. Lys57 is modified (N6-lactoyllysine; alternate). Residue Lys57 is modified to N6-glutaryllysine; alternate. An N6-succinyllysine; alternate modification is found at Lys57. An N6-methyllysine; by EHMT2; alternate modification is found at Lys57. Ser58 is subject to Phosphoserine. N6-(2-hydroxyisobutyryl)lysine; alternate is present on residues Lys65 and Lys80. Lys65 and Lys80 each carry N6-methyllysine; alternate. Lys80 is subject to N6,N6,N6-trimethyllysine; alternate. Lys80 is modified (N6,N6-dimethyllysine; alternate). The residue at position 80 (Lys80) is an N6-(beta-hydroxybutyryl)lysine; alternate. Position 80 is an N6-acetyllysine; alternate (Lys80). An N6-lactoyllysine; alternate modification is found at Lys80. Lys80 carries the post-translational modification N6-glutaryllysine; alternate. Lys80 is subject to N6-succinyllysine; alternate. At Thr81 the chain carries Phosphothreonine. Position 87 is a phosphoserine (Ser87). Residue Thr108 is modified to Phosphothreonine. An N6-acetyllysine; alternate mark is found at Lys116 and Lys123. N6-glutaryllysine; alternate occurs at positions 116 and 123. An N6-(2-hydroxyisobutyryl)lysine; alternate modification is found at Lys123. Lys123 carries the post-translational modification N6-(beta-hydroxybutyryl)lysine; alternate. Lys123 bears the N6-methyllysine; alternate mark. Position 123 is an N6-succinyllysine; alternate (Lys123).

Belongs to the histone H3 family. As to quaternary structure, the nucleosome is a histone octamer containing two molecules each of H2A, H2B, H3 and H4 assembled in one H3-H4 heterotetramer and two H2A-H2B heterodimers. The octamer wraps approximately 147 bp of DNA. Interacts with TONSL; CHAF1A; CHAF1B; MCM2 and DNAJC9. Interacts with NASP; NASP is a histone chaperone that stabilizes and maintains a soluble pool of Histone H3-H4 dimers. In terms of processing, acetylation is generally linked to gene activation. Acetylation on Lys-10 (H3K9ac) impairs methylation at Arg-9 (H3R8me2s). Acetylation on Lys-19 (H3K18ac) and Lys-24 (H3K24ac) favors methylation at Arg-18 (H3R17me). Acetylation at Lys-123 (H3K122ac) by EP300/p300 plays a central role in chromatin structure: localizes at the surface of the histone octamer and stimulates transcription, possibly by promoting nucleosome instability. Post-translationally, citrullination at Arg-9 (H3R8ci) and/or Arg-18 (H3R17ci) by PADI4 impairs methylation and represses transcription. Asymmetric dimethylation at Arg-18 (H3R17me2a) by CARM1 is linked to gene activation. Symmetric dimethylation at Arg-9 (H3R8me2s) by PRMT5 is linked to gene repression. Asymmetric dimethylation at Arg-3 (H3R2me2a) by PRMT6 is linked to gene repression and is mutually exclusive with H3 Lys-5 methylation (H3K4me2 and H3K4me3). H3R2me2a is present at the 3' of genes regardless of their transcription state and is enriched on inactive promoters, while it is absent on active promoters. In terms of processing, methylation at Lys-5 (H3K4me), Lys-37 (H3K36me) and Lys-80 (H3K79me) are linked to gene activation. Methylation at Lys-5 (H3K4me) facilitates subsequent acetylation of H3 and H4. Methylation at Lys-80 (H3K79me) is associated with DNA double-strand break (DSB) responses and is a specific target for TP53BP1. Methylation at Lys-10 (H3K9me) and Lys-28 (H3K27me) are linked to gene repression. Methylation at Lys-10 (H3K9me) is a specific target for HP1 proteins (CBX1, CBX3 and CBX5) and prevents subsequent phosphorylation at Ser-11 (H3S10ph) and acetylation of H3 and H4. Methylation at Lys-5 (H3K4me) and Lys-80 (H3K79me) require preliminary monoubiquitination of H2B at 'Lys-120'. Methylation at Lys-10 (H3K9me) and Lys-28 (H3K27me) are enriched in inactive X chromosome chromatin. Monomethylation at Lys-57 (H3K56me1) by EHMT2/G9A in G1 phase promotes interaction with PCNA and is required for DNA replication. Post-translationally, phosphorylated at Thr-4 (H3T3ph) by VRK1. Phosphorylated at Thr-4 (H3T3ph) by HASPIN during prophase and dephosphorylated during anaphase. Phosphorylation at Ser-11 (H3S10ph) by AURKB is crucial for chromosome condensation and cell-cycle progression during mitosis and meiosis. In addition phosphorylation at Ser-11 (H3S10ph) by RPS6KA4 and RPS6KA5 is important during interphase because it enables the transcription of genes following external stimulation, like mitogens, stress, growth factors or UV irradiation and result in the activation of genes, such as c-fos and c-jun. Phosphorylation at Ser-11 (H3S10ph), which is linked to gene activation, prevents methylation at Lys-10 (H3K9me) but facilitates acetylation of H3 and H4. Phosphorylation at Ser-11 (H3S10ph) by AURKB mediates the dissociation of HP1 proteins (CBX1, CBX3 and CBX5) from heterochromatin. Phosphorylation at Ser-11 (H3S10ph) is also an essential regulatory mechanism for neoplastic cell transformation. Phosphorylated at Ser-29 (H3S28ph) by MAP3K20 isoform 1, RPS6KA5 or AURKB during mitosis or upon ultraviolet B irradiation. Phosphorylation at Thr-7 (H3T6ph) by PRKCB is a specific tag for epigenetic transcriptional activation that prevents demethylation of Lys-5 (H3K4me) by LSD1/KDM1A. At centromeres, specifically phosphorylated at Thr-12 (H3T11ph) from prophase to early anaphase, by DAPK3 and PKN1. Phosphorylation at Thr-12 (H3T11ph) by PKN1 or isoform M2 of PKM (PKM2) is a specific tag for epigenetic transcriptional activation that promotes demethylation of Lys-10 (H3K9me) by KDM4C/JMJD2C. Phosphorylation at Thr-12 (H3T11ph) by chromatin-associated CHEK1 regulates the transcription of cell cycle regulatory genes by modulating acetylation of Lys-10 (H3K9ac). Phosphorylation at Tyr-42 (H3Y41ph) by JAK2 promotes exclusion of CBX5 (HP1 alpha) from chromatin. Monoubiquitinated by RAG1 in lymphoid cells, monoubiquitination is required for V(D)J recombination. Ubiquitinated by the CUL4-DDB-RBX1 complex in response to ultraviolet irradiation. This may weaken the interaction between histones and DNA and facilitate DNA accessibility to repair proteins. In terms of processing, lysine deamination at Lys-5 (H3K4all) to form allysine is mediated by LOXL2. Allysine formation by LOXL2 only takes place on H3K4me3 and results in gene repression. Post-translationally, crotonylation (Kcr) is specifically present in male germ cells and marks testis-specific genes in post-meiotic cells, including X-linked genes that escape sex chromosome inactivation in haploid cells. Crotonylation marks active promoters and enhancers and confers resistance to transcriptional repressors. It is also associated with post-meiotically activated genes on autosomes. Butyrylation of histones marks active promoters and competes with histone acetylation. It is present during late spermatogenesis. In terms of processing, succinylation at Lys-80 (H3K79succ) by KAT2A takes place with a maximum frequency around the transcription start sites of genes. It gives a specific tag for epigenetic transcription activation. Desuccinylation at Lys-123 (H3K122succ) by SIRT7 in response to DNA damage promotes chromatin condensation and double-strand breaks (DSBs) repair. Post-translationally, serine ADP-ribosylation by PARP1 or PARP2 constitutes the primary form of ADP-ribosylation of proteins in response to DNA damage. Serine ADP-ribosylation at Ser-11 (H3S10ADPr) promotes recruitment of CHD1L. H3S10ADPr is mutually exclusive with phosphorylation at Ser-11 (H3S10ph) and impairs acetylation at Lys-10 (H3K9ac). Serotonylated by TGM2 at Gln-6 (H3Q5ser) during serotonergic neuron differentiation. H3Q5ser is associated with trimethylation of Lys-5 (H3K4me3) and enhances general transcription factor IID (TFIID) complex-binding to H3K4me3, thereby facilitating transcription. In terms of processing, dopaminylated by TGM2 at Gln-6 (H3Q5dop) in ventral tegmental area (VTA) neurons. H3Q5dop mediates neurotransmission-independent role of nuclear dopamine by regulating relapse-related transcriptional plasticity in the reward system. Post-translationally, lactylated in macrophages by EP300/P300 by using lactoyl-CoA directly derived from endogenous or exogenous lactate, leading to stimulates gene transcription.

It is found in the nucleus. It localises to the chromosome. Functionally, core component of nucleosome. Nucleosomes wrap and compact DNA into chromatin, limiting DNA accessibility to the cellular machineries which require DNA as a template. Histones thereby play a central role in transcription regulation, DNA repair, DNA replication and chromosomal stability. DNA accessibility is regulated via a complex set of post-translational modifications of histones, also called histone code, and nucleosome remodeling. The chain is Histone H3.1 from Homo sapiens (Human).